Here is a 196-residue protein sequence, read N- to C-terminus: Carnitine operon protein CaiE (196 aa).

Positions 173–196 are disordered; that stretch reads TQPLRQMEENRPRLQGTTDVTPKR. Residues 187–196 are compositionally biased toward polar residues; the sequence is QGTTDVTPKR.

It belongs to the transferase hexapeptide repeat family.

Its pathway is amine and polyamine metabolism; carnitine metabolism. Overproduction of CaiE stimulates the activity of CaiB and CaiD. This chain is Carnitine operon protein CaiE, found in Escherichia coli O6:K15:H31 (strain 536 / UPEC).